A 297-amino-acid chain; its full sequence is Myozenin-1 (297 aa).

Positions M1 to L34 are disordered. Phosphoserine is present on S82. Residues F105 to E172 form a disordered region. Low complexity predominate over residues R118 to D128. A compositionally biased stretch (gly residues) spans S136–G162.

This sequence belongs to the myozenin family. As to quaternary structure, interacts with ACTN2, ACTN3, FLNA, FLNB, FLNC, LDB3, PPP3CA and TCAP. Interacts via its C-terminal region with MYOT.

The protein resides in the nucleus. It is found in the cell projection. The protein localises to the pseudopodium. In terms of biological role, myozenins may serve as intracellular binding proteins involved in linking Z-disk proteins such as alpha-actinin, gamma-filamin, TCAP/telethonin, LDB3/ZASP and localizing calcineurin signaling to the sarcomere. Plays an important role in the modulation of calcineurin signaling. May play a role in myofibrillogenesis. This Bos taurus (Bovine) protein is Myozenin-1 (MYOZ1).